A 259-amino-acid chain; its full sequence is Electron transfer flavoprotein subunit beta (259 aa).

This sequence belongs to the ETF beta-subunit/FixA family. In terms of assembly, heterodimer of an alpha and a beta subunit. Requires FAD as cofactor. The cofactor is AMP.

In terms of biological role, the electron transfer flavoprotein serves as a specific electron acceptor for other dehydrogenases. It transfers the electrons to the main respiratory chain via ETF-ubiquinone oxidoreductase (ETF dehydrogenase). The sequence is that of Electron transfer flavoprotein subunit beta (etfB) from Clostridium acetobutylicum (strain ATCC 824 / DSM 792 / JCM 1419 / IAM 19013 / LMG 5710 / NBRC 13948 / NRRL B-527 / VKM B-1787 / 2291 / W).